The primary structure comprises 342 residues: S-adenosylmethionine:tRNA ribosyltransferase-isomerase (342 aa).

This sequence belongs to the QueA family. Monomer.

It localises to the cytoplasm. The catalysed reaction is 7-aminomethyl-7-carbaguanosine(34) in tRNA + S-adenosyl-L-methionine = epoxyqueuosine(34) in tRNA + adenine + L-methionine + 2 H(+). Its pathway is tRNA modification; tRNA-queuosine biosynthesis. Its function is as follows. Transfers and isomerizes the ribose moiety from AdoMet to the 7-aminomethyl group of 7-deazaguanine (preQ1-tRNA) to give epoxyqueuosine (oQ-tRNA). The polypeptide is S-adenosylmethionine:tRNA ribosyltransferase-isomerase (Streptococcus pneumoniae (strain Hungary19A-6)).